A 494-amino-acid chain; its full sequence is Aspartyl/glutamyl-tRNA(Asn/Gln) amidotransferase subunit B (494 aa).

The protein belongs to the GatB/GatE family. GatB subfamily. As to quaternary structure, heterotrimer of A, B and C subunits.

The enzyme catalyses L-glutamyl-tRNA(Gln) + L-glutamine + ATP + H2O = L-glutaminyl-tRNA(Gln) + L-glutamate + ADP + phosphate + H(+). The catalysed reaction is L-aspartyl-tRNA(Asn) + L-glutamine + ATP + H2O = L-asparaginyl-tRNA(Asn) + L-glutamate + ADP + phosphate + 2 H(+). Allows the formation of correctly charged Asn-tRNA(Asn) or Gln-tRNA(Gln) through the transamidation of misacylated Asp-tRNA(Asn) or Glu-tRNA(Gln) in organisms which lack either or both of asparaginyl-tRNA or glutaminyl-tRNA synthetases. The reaction takes place in the presence of glutamine and ATP through an activated phospho-Asp-tRNA(Asn) or phospho-Glu-tRNA(Gln). In Synechococcus elongatus (strain ATCC 33912 / PCC 7942 / FACHB-805) (Anacystis nidulans R2), this protein is Aspartyl/glutamyl-tRNA(Asn/Gln) amidotransferase subunit B.